The chain runs to 380 residues: GTP-binding protein 10 (380 aa).

In terms of domain architecture, Obg spans 13–148 (GNFVDNVRLY…RNIRLDLKLI (136 aa)). Residues 149–344 (ADFGLVGFPN…LKSLIRQSLE (196 aa)) form the OBG-type G domain. Residues 155 to 162 (GFPNAGKS), 202 to 206 (DLPGL), and 278 to 281 (NKMD) contribute to the GTP site.

Belongs to the TRAFAC class OBG-HflX-like GTPase superfamily. OBG GTPase family.

It is found in the nucleus. The protein resides in the nucleolus. Its function is as follows. May be involved in the ribosome maturation process. This is GTP-binding protein 10 (gtpbp10) from Danio rerio (Zebrafish).